Here is an 877-residue protein sequence, read N- to C-terminus: Oligopeptide transporter 2 (877 aa).

Residues 1–167 (MSETVKDKVI…DPTIPVETFR (167 aa)) are Cytoplasmic-facing. A helical transmembrane segment spans residues 168–188 (AYFLAIIWSVIGSGFNEFFSH). Residue Arg-189 is a topological domain, extracellular. The helical transmembrane segment at 190–210 (VVSISLNTPIIQMFLYICGKA) threads the bilayer. Residues 211-240 (WAKTIPCWTITIRGRKYGINIDKPWTQKEQ) are Cytoplasmic-facing. The chain crosses the membrane as a helical span at residues 241–261 (MFSTLLYAICQGAFYTHYNIL). Over 262–272 (TQKLFYHSAFS) the chain is Extracellular. Residues 273-293 (FGYQFLLSLSVQFIGFGFAGI) traverse the membrane as a helical segment. Residues 294-334 (LRKFVVYPARALWPTVMPTIAINKALLGKEKHESGMSRYKF) lie on the Cytoplasmic side of the membrane. The chain crosses the membrane as a helical span at residues 335–355 (FFLTFFIMFIYNWFPTYIINI). Topologically, residues 356–374 (LNTFNWMTWIKPSNINLAN) are extracellular. Residue Asn-374 is glycosylated (N-linked (GlcNAc...) asparagine). The helical transmembrane segment at 375–395 (ITGGVTGLGINPISSFDWNVI) threads the bilayer. The Cytoplasmic portion of the chain corresponds to 396-404 (SFNSPLVYP). Residues 405-425 (FWSYLTQYLGCILAALIVIAV) form a helical membrane-spanning segment. The Extracellular segment spans residues 426–480 (YYSNYMSCQYLPIFTNSLYTNTGHSFKVTEVLDSDNKLDVKKYQSYSPPYYSAGN). A helical membrane pass occupies residues 481–501 (LVSYGAFICAYPLMITWSFIV). Over 502–553 (HSKLLFNAFKDWALNLWAMRKLKSWVTMFKSDYRALDDYDDPHSNAMKNYKE) the chain is Cytoplasmic. The chain crosses the membrane as a helical span at residues 554 to 574 (VPDWWYFAILIGSLVVGIAVV). Topologically, residues 575–582 (EHYPTNTP) are extracellular. Residues 583–603 (VWGLFVCLGFNFVFLIPTTIL) traverse the membrane as a helical segment. Topologically, residues 604–614 (QATTGYSFGLN) are cytoplasmic. The chain crosses the membrane as a helical span at residues 615 to 635 (LLIEMVMGYALPGNPIAIMIL). Topologically, residues 636 to 671 (KAFGYNIDGQADNYVSNLKIAHYCKIPPMALFRGQC) are extracellular. Residues 672 to 692 (VIVFIQIFVNLGVLNWQISNI) form a helical membrane-spanning segment. The Cytoplasmic segment spans residues 693–730 (KDFCTPHQNAKFTCPDAVTYYNASVVWGAIGPKRIFNY). A helical membrane pass occupies residues 731–751 (IYPIFKWCWLIGACIGIFFGV). Residues 752–766 (WKRWGKFYPRYFDPM) lie on the Extracellular side of the membrane. A helical transmembrane segment spans residues 767 to 789 (LFVGGMLNMSPPYNLMYYTSGMI). Residues 790-811 (VSYISQYYMKRHHLNLWEKYNY) are Cytoplasmic-facing. A helical membrane pass occupies residues 812–832 (VLSAGFSTGLVLSAIIIFFAV). Over 833 to 877 (QYKDTAFNWWGNTVPYAGADGVGYPLKNITDTANGYFGYAPGHYP) the chain is Extracellular. Asn-860 is a glycosylation site (N-linked (GlcNAc...) asparagine).

It belongs to the oligopeptide OPT transporter family.

It is found in the membrane. Functionally, transports tetra- and pentapeptides. Does not transport glutathione. The sequence is that of Oligopeptide transporter 2 (OPT2) from Saccharomyces cerevisiae (strain ATCC 204508 / S288c) (Baker's yeast).